The primary structure comprises 1117 residues: Guanylate cyclase D (1117 aa).

An N-terminal signal peptide occupies residues 1–66 (MAGLQQGCHF…ADSLSLLAWA (66 aa)). Topologically, residues 67–479 (RETFTLGVLG…CIRGVQPLGS (413 aa)) are extracellular. Residues cysteine 121 and cysteine 149 are joined by a disulfide bond. The chain crosses the membrane as a helical span at residues 480–500 (LLTLTIACVLALVGGFLAYFI). Residues 501 to 1117 (RLGLQQLRLL…RKSGEAGPGP (617 aa)) lie on the Cytoplasmic side of the membrane. A disordered region spans residues 529-557 (TPSRRRPHVDSGSESRSVVDGGSPRSVTQ). Residues 541–812 (SESRSVVDGG…PSLDQIYTQF (272 aa)) form the Protein kinase domain. An interaction with NCALD region spans residues 874–915 (MGTTVEPEYFDQVTIYFSDIVGFTTISALSEPIEVVGFLNDL). Residues 887–1017 (TIYFSDIVGF…DTVNTASRME (131 aa)) enclose the Guanylate cyclase domain. Residues 1096–1117 (GFAKARQGLAEPRKSGEAGPGP) form a disordered region.

It belongs to the adenylyl cyclase class-4/guanylyl cyclase family. Interacts (via the catalytic domain) with NCALD. Found in a subset of olfactory neurons in the main olfactory epithelium.

The protein resides in the cell projection. It is found in the cilium membrane. The catalysed reaction is GTP = 3',5'-cyclic GMP + diphosphate. Activated by Ca(2+). Functionally, functions as an olfactory receptor activated by urine odorants, uroguanylin and guanylin and as well by the volatile semiochemicals carbon disulfide (CS2) and carbon dioxide (CO2). Has guanylate cyclase activity upon binding of the ligand. Activation of GUCY2D neurons leads to the cGMP-dependent activation of the CNGA3 channels, membrane depolarization and an increase in action potential frequency. Signaling pathways activated by GUCY2D may trigger social behaviors such as acquisition of food preference. The chain is Guanylate cyclase D from Mus musculus (Mouse).